The primary structure comprises 340 residues: GTPase Obg (340 aa).

The region spanning 1–161 is the Obg domain; it reads MKFVDMTNIT…QHLLLELLLI (161 aa). In terms of domain architecture, OBG-type G spans 162–335; sequence ANVGIFGLPN…LCNSIMKFIM (174 aa). GTP contacts are provided by residues 168 to 175, 193 to 197, 215 to 218, 285 to 288, and 316 to 318; these read GLPNSGKS, FTTLV, DIPG, NKID, and SSI. Residues S175 and T195 each coordinate Mg(2+).

Belongs to the TRAFAC class OBG-HflX-like GTPase superfamily. OBG GTPase family. In terms of assembly, monomer. It depends on Mg(2+) as a cofactor.

Its subcellular location is the cytoplasm. Functionally, an essential GTPase which binds GTP, GDP and possibly (p)ppGpp with moderate affinity, with high nucleotide exchange rates and a fairly low GTP hydrolysis rate. Plays a role in control of the cell cycle, stress response, ribosome biogenesis and in those bacteria that undergo differentiation, in morphogenesis control. This Blochmanniella pennsylvanica (strain BPEN) protein is GTPase Obg.